The chain runs to 404 residues: Cysteine desulfurase IscS (404 aa).

Pyridoxal 5'-phosphate-binding positions include 75–76 (AT), N155, Q183, and 203–205 (SAH). K206 carries the N6-(pyridoxal phosphate)lysine modification. T243 serves as a coordination point for pyridoxal 5'-phosphate. The active-site Cysteine persulfide intermediate is C328. C328 is a [2Fe-2S] cluster binding site.

The protein belongs to the class-V pyridoxal-phosphate-dependent aminotransferase family. NifS/IscS subfamily. As to quaternary structure, homodimer. Forms a heterotetramer with IscU, interacts with other sulfur acceptors. The cofactor is pyridoxal 5'-phosphate.

The protein resides in the cytoplasm. It carries out the reaction (sulfur carrier)-H + L-cysteine = (sulfur carrier)-SH + L-alanine. The protein operates within cofactor biosynthesis; iron-sulfur cluster biosynthesis. Its function is as follows. Master enzyme that delivers sulfur to a number of partners involved in Fe-S cluster assembly, tRNA modification or cofactor biosynthesis. Catalyzes the removal of elemental sulfur atoms from cysteine to produce alanine. Functions as a sulfur delivery protein for Fe-S cluster synthesis onto IscU, an Fe-S scaffold assembly protein, as well as other S acceptor proteins. This chain is Cysteine desulfurase IscS, found in Neisseria meningitidis serogroup A / serotype 4A (strain DSM 15465 / Z2491).